Reading from the N-terminus, the 886-residue chain is CRM-domain containing factor CFM3, chloroplastic/mitochondrial (886 aa).

The N-terminal 70 residues, 1–70 (MAAAAMAISP…LDLRPEPSPS (70 aa)), are a transit peptide targeting the chloroplast and mitochondrion. 2 disordered regions span residues 56–84 (RPAS…TSRS) and 269–291 (TKGT…PPGH). CRM domains lie at 174-270 (LTLP…EPTK), 378-475 (PSLS…ELAE), and 590-690 (ETIT…SKLR). A compositionally biased stretch (polar residues) spans 270-281 (KGTSKNTQTLGM). Positions 771-886 (SFDNSVAVQN…QSTELTNTCS (116 aa)) are disordered. Residues 793–827 (NSDDEGDYSDEDDDEDDDNDEEDGFDYENDDEDDV) show a composition bias toward acidic residues. Composition is skewed to polar residues over residues 841 to 852 (DFGSSDSENYVS) and 869 to 886 (DSRN…NTCS).

In terms of assembly, interacts with RNA. Part of large ribonucleo-protein particles that contain CAF1 and/or CAF2, and RNC1.

The protein resides in the plastid. Its subcellular location is the chloroplast. The protein localises to the mitochondrion. Binds specific group II introns in chloroplasts and facilitates their splicing. Acts on subgroup IIB introns. The substrates of the subgroup IIB also require the CRM domain proteins CAF1 or CAF2, with a simultaneous binding of CFM3 and CAF1 or CAF2. May influence the biogenesis of the mitochondrial small ribosomal subunit. This is CRM-domain containing factor CFM3, chloroplastic/mitochondrial from Oryza sativa subsp. japonica (Rice).